The primary structure comprises 472 residues: Trigger factor (472 aa).

Residues 174 to 261 enclose the PPIase FKBP-type domain; it reads GDIAVLGFKG…LKDLKTRELP (88 aa). Positions 430-472 are disordered; it reads ENSTLTEQAPAADDADDAEKPAAKKKPAAKKKTPAKSKTDAEA. Basic residues predominate over residues 452–464; the sequence is AKKKPAAKKKTPA.

This sequence belongs to the FKBP-type PPIase family. Tig subfamily.

It is found in the cytoplasm. It catalyses the reaction [protein]-peptidylproline (omega=180) = [protein]-peptidylproline (omega=0). In terms of biological role, involved in protein export. Acts as a chaperone by maintaining the newly synthesized protein in an open conformation. Functions as a peptidyl-prolyl cis-trans isomerase. The sequence is that of Trigger factor from Parasynechococcus marenigrum (strain WH8102).